Here is a 532-residue protein sequence, read N- to C-terminus: Membrane protein insertase YidC (532 aa).

Helical transmembrane passes span 6–26, 317–337, 342–362, 411–431, 451–473, and 496–516; these read IVLA…FAEY, AIDF…LTFF, GNWG…FWPL, GGCL…QALL, VWLA…GASM, and PIIF…YWLF.

It belongs to the OXA1/ALB3/YidC family. Type 1 subfamily. Interacts with the Sec translocase complex via SecD. Specifically interacts with transmembrane segments of nascent integral membrane proteins during membrane integration.

It localises to the cell membrane. In terms of biological role, required for the insertion and/or proper folding and/or complex formation of integral membrane proteins into the membrane. Involved in integration of membrane proteins that insert both dependently and independently of the Sec translocase complex, as well as at least some lipoproteins. Aids folding of multispanning membrane proteins. The polypeptide is Membrane protein insertase YidC (Lawsonia intracellularis (strain PHE/MN1-00)).